A 546-amino-acid polypeptide reads, in one-letter code: MAKEIKFSDSARNLLFEGVRQLHDAVKVTMGPRGRNVLIQKSYGAPSITKDGVSVAKEIELSCPVANMGAQLVKEVASKTADAAGDGTTTATVLAYSIFKEGLRNITAGANPIEVKRGMDKAAEAIINELKKASKKVGGKEEITQVATISANSDHNIGKLIADAMEKVGKDGVITVEEAKGIEDELDVVEGMQFDRGYLSPYFVTNAEKMTAQLDNAYILLTDKKISSMKDILPLLEKTMKEGKPLLIIAEDIEGEALTTLVVNKLRGVLNIAAVKAPGFGDRRKEMLKDIAVLTGGQVISEELGLSLENAEVEFLGKAGRIVIDKDNTTIVDGKGHSDDVKDRVAQIKTQIASTTSDYDKEKLQERLAKLSGGVAVIKVGAASEVEMKEKKDRVDDALSATKAAVEEGIVIGGGAALIRAAQKVHLNLHDDEKVGYEIIMRAIKAPLAQIAINAGYDGGVVVNEVEKHEGHFGFNASNGKYVDMFKEGIIDPLKVERIALQNAVSVSSLLLTTEATVHEIKEEKAAPAMPDMGGMGGMGGMGGMM.

ATP is bound by residues T29–P32, K50, D86–T90, G414, and D492.

This sequence belongs to the chaperonin (HSP60) family. In terms of assembly, forms a cylinder of 14 subunits composed of two heptameric rings stacked back-to-back. Interacts with the co-chaperonin GroES.

Its subcellular location is the cytoplasm. It catalyses the reaction ATP + H2O + a folded polypeptide = ADP + phosphate + an unfolded polypeptide.. Its function is as follows. Together with its co-chaperonin GroES, plays an essential role in assisting protein folding. The GroEL-GroES system forms a nano-cage that allows encapsulation of the non-native substrate proteins and provides a physical environment optimized to promote and accelerate protein folding. This Helicobacter pylori (strain G27) protein is Chaperonin GroEL.